An 878-amino-acid chain; its full sequence is Pyruvate, phosphate dikinase (878 aa).

Residues 1–347 are N-terminal; sequence MKKLIYYFGS…LYILQTRTAK (347 aa). Arginine 96 serves as a coordination point for ATP. Residues 348 to 404 form a linker 1 region; the sequence is RTAIAAINIAVQMVEEKLISKEQALMRIDPESLNQLLHTRIDYSKGLTSIAEGLPAS. Residues 405–502 are central; that stretch reads PGAATGIAVF…VIKQGDIITI (98 aa). Threonine 457 carries the phosphothreonine; by PDRP1 modification. The active-site Tele-phosphohistidine intermediate is histidine 459. A linker 2 region spans residues 503 to 537; it reads DGGSGKIFLGEMPLIQPTFSEESKLILDWADEISS. Residues 538–878 form a C-terminal region; it reads LKVRANAETV…ASAQAKIKHG (341 aa). Positions 565, 621, 749, 770, 771, 772, and 773 each coordinate substrate. Glutamate 749 contributes to the Mg(2+) binding site. Aspartate 773 serves as a coordination point for Mg(2+). The active-site Proton donor is the cysteine 835.

Belongs to the PEP-utilizing enzyme family. As to quaternary structure, homodimer. The cofactor is Mg(2+). Phosphorylation of Thr-457 in the dark inactivates the enzyme. Dephosphorylation upon light stimulation reactivates the enzyme.

The enzyme catalyses pyruvate + phosphate + ATP = phosphoenolpyruvate + AMP + diphosphate + H(+). Its activity is regulated as follows. Activated by light-induced dephosphorylation. Inhibited by dark-induced phosphorylation. Both reactions are catalyzed by PDRP1. Functionally, catalyzes the reversible phosphorylation of pyruvate and phosphate. The chain is Pyruvate, phosphate dikinase (ppdK) from Rickettsia felis (strain ATCC VR-1525 / URRWXCal2) (Rickettsia azadi).